Consider the following 75-residue polypeptide: MARSDMIEVDGVIVEPRSNGFFTVRLDLENQPEVIAHLGGKLRRHYIRVVPGDRVTVELSPYDLTRGRIVYRYRH.

An S1-like domain is found at 1–74 (MARSDMIEVD…TRGRIVYRYR (74 aa)).

Belongs to the IF-1 family. In terms of assembly, component of the 30S ribosomal translation pre-initiation complex which assembles on the 30S ribosome in the order IF-2 and IF-3, IF-1 and N-formylmethionyl-tRNA(fMet); mRNA recruitment can occur at any time during PIC assembly.

Its subcellular location is the cytoplasm. Functionally, one of the essential components for the initiation of protein synthesis. Stabilizes the binding of IF-2 and IF-3 on the 30S subunit to which N-formylmethionyl-tRNA(fMet) subsequently binds. Helps modulate mRNA selection, yielding the 30S pre-initiation complex (PIC). Upon addition of the 50S ribosomal subunit IF-1, IF-2 and IF-3 are released leaving the mature 70S translation initiation complex. This is Translation initiation factor IF-1 1 from Symbiobacterium thermophilum (strain DSM 24528 / JCM 14929 / IAM 14863 / T).